We begin with the raw amino-acid sequence, 382 residues long: Flap endonuclease 1-A (382 aa).

The N-domain stretch occupies residues 1-104; that stretch reads MGIHGLAKLI…GELAKRSERR (104 aa). D34 is a Mg(2+) binding site. Positions 47 and 70 each coordinate DNA. Residues D86, E158, E160, D179, and D181 each coordinate Mg(2+). The I-domain stretch occupies residues 122-253; it reads NIEKFTKRLV…KRAIDLIRQH (132 aa). E158 lines the DNA pocket. Residues G231 and D233 each coordinate DNA. D233 is a Mg(2+) binding site. The interval 336–344 is interaction with PCNA; sequence TQGRLDDFF. The disordered stretch occupies residues 350–382; it reads VSSTKRKEAESKGSAKKKAKTGGTPAGKFKRGK.

This sequence belongs to the XPG/RAD2 endonuclease family. FEN1 subfamily. In terms of assembly, interacts with PCNA. Three molecules of fen1 bind to one PCNA trimer with each molecule binding to one PCNA monomer. PCNA stimulates the nuclease activity without altering cleavage specificity. The cofactor is Mg(2+). Post-translationally, phosphorylated. Phosphorylation upon DNA damage induces relocalization to the nuclear plasma.

It localises to the nucleus. It is found in the nucleolus. The protein localises to the nucleoplasm. The protein resides in the mitochondrion. Structure-specific nuclease with 5'-flap endonuclease and 5'-3' exonuclease activities involved in DNA replication and repair. During DNA replication, cleaves the 5'-overhanging flap structure that is generated by displacement synthesis when DNA polymerase encounters the 5'-end of a downstream Okazaki fragment. It enters the flap from the 5'-end and then tracks to cleave the flap base, leaving a nick for ligation. Also involved in the long patch base excision repair (LP-BER) pathway, by cleaving within the apurinic/apyrimidinic (AP) site-terminated flap. Acts as a genome stabilization factor that prevents flaps from equilibrating into structures that lead to duplications and deletions. Also possesses 5'-3' exonuclease activity on nicked or gapped double-stranded DNA, and exhibits RNase H activity. Also involved in replication and repair of rDNA and in repairing mitochondrial DNA. This is Flap endonuclease 1-A (fen1-a) from Xenopus laevis (African clawed frog).